Reading from the N-terminus, the 667-residue chain is Beta-galactosidase LacZ (667 aa).

Substrate is bound at residue R109. C113 contributes to the Zn(2+) binding site. Substrate is bound at residue N147. Residue E148 is the Proton donor of the active site. Residues C153, C155, and C158 each contribute to the Zn(2+) site. E307 functions as the Nucleophile in the catalytic mechanism. Substrate is bound by residues W315 and 355–358 (EKFH).

It belongs to the glycosyl hydrolase 42 family.

It carries out the reaction Hydrolysis of terminal non-reducing beta-D-galactose residues in beta-D-galactosides.. In terms of biological role, catalyzes the hydrolysis of lactose to its constituent monosaccharides glucose and galactose. In Lactobacillus acidophilus (strain ATCC 700396 / NCK56 / N2 / NCFM), this protein is Beta-galactosidase LacZ.